The chain runs to 342 residues: Nicotinate-nucleotide--dimethylbenzimidazole phosphoribosyltransferase (342 aa).

The active-site Proton acceptor is glutamate 311.

This sequence belongs to the CobT family.

It carries out the reaction 5,6-dimethylbenzimidazole + nicotinate beta-D-ribonucleotide = alpha-ribazole 5'-phosphate + nicotinate + H(+). It participates in nucleoside biosynthesis; alpha-ribazole biosynthesis; alpha-ribazole from 5,6-dimethylbenzimidazole: step 1/2. Functionally, catalyzes the synthesis of alpha-ribazole-5'-phosphate from nicotinate mononucleotide (NAMN) and 5,6-dimethylbenzimidazole (DMB). The polypeptide is Nicotinate-nucleotide--dimethylbenzimidazole phosphoribosyltransferase (Vibrio vulnificus (strain CMCP6)).